The sequence spans 101 residues: Small ribosomal subunit protein uS14 (101 aa).

The protein belongs to the universal ribosomal protein uS14 family. Part of the 30S ribosomal subunit. Contacts proteins S3 and S10.

Functionally, binds 16S rRNA, required for the assembly of 30S particles and may also be responsible for determining the conformation of the 16S rRNA at the A site. The protein is Small ribosomal subunit protein uS14 of Neisseria gonorrhoeae (strain ATCC 700825 / FA 1090).